The primary structure comprises 204 residues: Bombinin-like peptides 1 (204 aa).

The or 18 signal peptide spans 1 to 16; that stretch reads MNFKYIVAVSILIASA. Asn70 and Asn133 each carry asparagine amide.

This sequence belongs to the bombinin family. As to expression, expressed by the skin glands.

It is found in the secreted. Functionally, has antimicrobial activity, but no hemolytic activity. Preference on killing Gram-negative non-enteric bacteria. The sequence is that of Bombinin-like peptides 1 from Bombina orientalis (Oriental fire-bellied toad).